The chain runs to 146 residues: MGLRLNELSPGVGAKKTAQRRGRGIGSGLGKTGGRGVKGQKSRSGSSIRSGFEGGQMPLYRRLPKFGFTSKMAMTTAEVRLSELSQIEGDVVSIETLKAANLIRRDMKRARVMLSGEVTKAYTFKGIKVTKGAKQAIEAAGGSIEE.

The tract at residues 1-55 is disordered; that stretch reads MGLRLNELSPGVGAKKTAQRRGRGIGSGLGKTGGRGVKGQKSRSGSSIRSGFEGG. Residues 24-37 are compositionally biased toward gly residues; that stretch reads GIGSGLGKTGGRGV.

This sequence belongs to the universal ribosomal protein uL15 family. Part of the 50S ribosomal subunit.

Functionally, binds to the 23S rRNA. This is Large ribosomal subunit protein uL15 from Psychrobacter cryohalolentis (strain ATCC BAA-1226 / DSM 17306 / VKM B-2378 / K5).